We begin with the raw amino-acid sequence, 178 residues long: Crossover junction endodeoxyribonuclease RuvC (178 aa).

Active-site residues include D11, E71, and D143. Positions 11, 71, and 143 each coordinate Mg(2+).

It belongs to the RuvC family. Homodimer which binds Holliday junction (HJ) DNA. The HJ becomes 2-fold symmetrical on binding to RuvC with unstacked arms; it has a different conformation from HJ DNA in complex with RuvA. In the full resolvosome a probable DNA-RuvA(4)-RuvB(12)-RuvC(2) complex forms which resolves the HJ. Mg(2+) serves as cofactor.

The protein resides in the cytoplasm. It carries out the reaction Endonucleolytic cleavage at a junction such as a reciprocal single-stranded crossover between two homologous DNA duplexes (Holliday junction).. In terms of biological role, the RuvA-RuvB-RuvC complex processes Holliday junction (HJ) DNA during genetic recombination and DNA repair. Endonuclease that resolves HJ intermediates. Cleaves cruciform DNA by making single-stranded nicks across the HJ at symmetrical positions within the homologous arms, yielding a 5'-phosphate and a 3'-hydroxyl group; requires a central core of homology in the junction. The consensus cleavage sequence is 5'-(A/T)TT(C/G)-3'. Cleavage occurs on the 3'-side of the TT dinucleotide at the point of strand exchange. HJ branch migration catalyzed by RuvA-RuvB allows RuvC to scan DNA until it finds its consensus sequence, where it cleaves and resolves the cruciform DNA. The polypeptide is Crossover junction endodeoxyribonuclease RuvC (Neisseria meningitidis serogroup B (strain ATCC BAA-335 / MC58)).